Reading from the N-terminus, the 403-residue chain is Tryptophan synthase beta chain (403 aa).

Position 87 is an N6-(pyridoxal phosphate)lysine (Lys87).

The protein belongs to the TrpB family. Tetramer of two alpha and two beta chains. The cofactor is pyridoxal 5'-phosphate.

It catalyses the reaction (1S,2R)-1-C-(indol-3-yl)glycerol 3-phosphate + L-serine = D-glyceraldehyde 3-phosphate + L-tryptophan + H2O. It participates in amino-acid biosynthesis; L-tryptophan biosynthesis; L-tryptophan from chorismate: step 5/5. Functionally, the beta subunit is responsible for the synthesis of L-tryptophan from indole and L-serine. The sequence is that of Tryptophan synthase beta chain from Shewanella loihica (strain ATCC BAA-1088 / PV-4).